Consider the following 248-residue polypeptide: MTNSTAEKQQPLTLDISKEALADINDMLEKTTAQQRVAWALNNLPDTHIVSSSFGAQSAVMLHMLTQVQPDIPVVLTDTGYLFPETYKFIDELVEKLNLNLHVYRADMSSAWQEARFGRLWEQGVEGIEKYNKLNKVEPMQRALRELNAGTWFAGLRRSQSDTRGKLPVLQKVGQQFKLYPIIDWSNKDLHYYLKDNELSYHPLWEQGYVSIGDWHTTQSLQEGMSEQDTRFFGLKRECGLHEFGDGI.

The active-site Nucleophile; cysteine thiosulfonate intermediate is the Cys-239.

The protein belongs to the PAPS reductase family. CysH subfamily.

The protein localises to the cytoplasm. The enzyme catalyses [thioredoxin]-disulfide + sulfite + adenosine 3',5'-bisphosphate + 2 H(+) = [thioredoxin]-dithiol + 3'-phosphoadenylyl sulfate. The protein operates within sulfur metabolism; hydrogen sulfide biosynthesis; sulfite from sulfate: step 3/3. In terms of biological role, catalyzes the formation of sulfite from phosphoadenosine 5'-phosphosulfate (PAPS) using thioredoxin as an electron donor. In Alteromonas mediterranea (strain DSM 17117 / CIP 110805 / LMG 28347 / Deep ecotype), this protein is Phosphoadenosine 5'-phosphosulfate reductase.